The following is a 527-amino-acid chain: Glutamate--cysteine ligase (527 aa).

Belongs to the glutamate--cysteine ligase type 1 family. Type 1 subfamily.

It catalyses the reaction L-cysteine + L-glutamate + ATP = gamma-L-glutamyl-L-cysteine + ADP + phosphate + H(+). It functions in the pathway sulfur metabolism; glutathione biosynthesis; glutathione from L-cysteine and L-glutamate: step 1/2. This chain is Glutamate--cysteine ligase, found in Pseudomonas aeruginosa (strain ATCC 15692 / DSM 22644 / CIP 104116 / JCM 14847 / LMG 12228 / 1C / PRS 101 / PAO1).